The chain runs to 327 residues: DNA-directed RNA polymerase subunit alpha (327 aa).

The interval 1–233 (MVREKVKVST…NLFIPFLHVE (233 aa)) is alpha N-terminal domain (alpha-NTD). The segment at 265-327 (KELAFQYIFI…KKILDILEKK (63 aa)) is alpha C-terminal domain (alpha-CTD).

It belongs to the RNA polymerase alpha chain family. In plastids the minimal PEP RNA polymerase catalytic core is composed of four subunits: alpha, beta, beta', and beta''. When a (nuclear-encoded) sigma factor is associated with the core the holoenzyme is formed, which can initiate transcription.

The protein resides in the plastid. It is found in the chloroplast. The enzyme catalyses RNA(n) + a ribonucleoside 5'-triphosphate = RNA(n+1) + diphosphate. In terms of biological role, DNA-dependent RNA polymerase catalyzes the transcription of DNA into RNA using the four ribonucleoside triphosphates as substrates. This Olimarabidopsis pumila (Dwarf rocket) protein is DNA-directed RNA polymerase subunit alpha.